We begin with the raw amino-acid sequence, 365 residues long: Probable dual-specificity RNA methyltransferase RlmN (365 aa).

The Proton acceptor role is filled by glutamate 99. A Radical SAM core domain is found at glutamine 105 to aspartate 344. Cysteine 112 and cysteine 349 form a disulfide bridge. [4Fe-4S] cluster is bound by residues cysteine 119, cysteine 123, and cysteine 126. S-adenosyl-L-methionine is bound by residues glycine 171–glutamate 172, serine 203, serine 227–histidine 229, and asparagine 305. Residue cysteine 349 is the S-methylcysteine intermediate of the active site.

The protein belongs to the radical SAM superfamily. RlmN family. Requires [4Fe-4S] cluster as cofactor.

The protein localises to the cytoplasm. The enzyme catalyses adenosine(2503) in 23S rRNA + 2 reduced [2Fe-2S]-[ferredoxin] + 2 S-adenosyl-L-methionine = 2-methyladenosine(2503) in 23S rRNA + 5'-deoxyadenosine + L-methionine + 2 oxidized [2Fe-2S]-[ferredoxin] + S-adenosyl-L-homocysteine. It catalyses the reaction adenosine(37) in tRNA + 2 reduced [2Fe-2S]-[ferredoxin] + 2 S-adenosyl-L-methionine = 2-methyladenosine(37) in tRNA + 5'-deoxyadenosine + L-methionine + 2 oxidized [2Fe-2S]-[ferredoxin] + S-adenosyl-L-homocysteine. Its function is as follows. Specifically methylates position 2 of adenine 2503 in 23S rRNA and position 2 of adenine 37 in tRNAs. The polypeptide is Probable dual-specificity RNA methyltransferase RlmN (Lactococcus lactis subsp. cremoris (strain SK11)).